A 787-amino-acid chain; its full sequence is Signal transducer and activator of transcription 5B (787 aa).

The residue at position 90 (Tyr90) is a Phosphotyrosine. Ser128 carries the post-translational modification Phosphoserine. In terms of domain architecture, SH2 spans Trp589–Val686. A Phosphotyrosine modification is found at Tyr682. The residue at position 699 (Tyr699) is a Phosphotyrosine; by HCK, JAK and PTK6.

Belongs to the transcription factor STAT family. Upon activation, forms a homodimer or a heterodimer with a related family member. Binds NR3C1. Interacts with NCOA1. Interacts with NMI. Interacts with SOCS7. Interacts (via SH2 domain) with INSR. Interacts with CPEB3; this inhibits STAT5B-mediated transcriptional activation. In terms of processing, tyrosine phosphorylated in response to signaling via activated KIT, resulting in translocation to the nucleus. Tyrosine phosphorylated in response to signaling via activated FLT3; wild-type FLT3 results in much weaker phosphorylation than constitutively activated mutant FLT3. Alternatively, can be phosphorylated by JAK2. Phosphorylation at Tyr-699 by PTK6 or HCK leads to an increase of its transcriptional activity.

It localises to the cytoplasm. The protein resides in the nucleus. Carries out a dual function: signal transduction and activation of transcription. Mediates cellular responses to the cytokine KITLG/SCF and other growth factors. Binds to the GAS element and activates PRL-induced transcription. Positively regulates hematopoietic/erythroid differentiation. This is Signal transducer and activator of transcription 5B (STAT5B) from Sus scrofa (Pig).